A 57-amino-acid chain; its full sequence is MAKSKGNREKIKLVSSAKTGHFYTTEKNKRNMPEKMEIKKFDPVIRQHVMYKEAKIK.

It belongs to the bacterial ribosomal protein bL33 family.

In Shewanella denitrificans (strain OS217 / ATCC BAA-1090 / DSM 15013), this protein is Large ribosomal subunit protein bL33.